A 78-amino-acid chain; its full sequence is MTDSIPKKPLKKGSLVFVDKENYIKSIEALASDNDLPNYVFEGPGEILSLKDEYAQVRWRRPVPDVWLKLDQLKEYTH.

It belongs to the complex I NdhO subunit family. In terms of assembly, NDH-1 can be composed of about 15 different subunits; different subcomplexes with different compositions have been identified which probably have different functions.

The protein resides in the cellular thylakoid membrane. The enzyme catalyses a plastoquinone + NADH + (n+1) H(+)(in) = a plastoquinol + NAD(+) + n H(+)(out). The catalysed reaction is a plastoquinone + NADPH + (n+1) H(+)(in) = a plastoquinol + NADP(+) + n H(+)(out). Functionally, NDH-1 shuttles electrons from an unknown electron donor, via FMN and iron-sulfur (Fe-S) centers, to quinones in the respiratory and/or the photosynthetic chain. The immediate electron acceptor for the enzyme in this species is believed to be plastoquinone. Couples the redox reaction to proton translocation, and thus conserves the redox energy in a proton gradient. Cyanobacterial NDH-1 also plays a role in inorganic carbon-concentration. The protein is NAD(P)H-quinone oxidoreductase subunit O of Prochlorococcus marinus (strain AS9601).